The chain runs to 546 residues: Probable malate:quinone oxidoreductase (546 aa).

It belongs to the MQO family. FAD serves as cofactor.

It carries out the reaction (S)-malate + a quinone = a quinol + oxaloacetate. Its pathway is carbohydrate metabolism; tricarboxylic acid cycle; oxaloacetate from (S)-malate (quinone route): step 1/1. The polypeptide is Probable malate:quinone oxidoreductase (Acinetobacter baumannii (strain AB0057)).